We begin with the raw amino-acid sequence, 452 residues long: Cell division protein FtsZ (452 aa).

GTP contacts are provided by residues 24–28, 111–113, Glu-142, Arg-146, and Asp-190; these read GAGSN and GTG. Residues 432–452 form a disordered region; that stretch reads DQDNKESDIHDIPAFLRKKRD. The segment covering 433 to 442 has biased composition (basic and acidic residues); that stretch reads QDNKESDIHD.

The protein belongs to the FtsZ family. As to quaternary structure, homodimer. Polymerizes to form a dynamic ring structure in a strictly GTP-dependent manner. Interacts directly with several other division proteins.

The protein resides in the cytoplasm. Its function is as follows. Essential cell division protein that forms a contractile ring structure (Z ring) at the future cell division site. The regulation of the ring assembly controls the timing and the location of cell division. One of the functions of the FtsZ ring is to recruit other cell division proteins to the septum to produce a new cell wall between the dividing cells. Binds GTP and shows GTPase activity. The protein is Cell division protein FtsZ of Rickettsia conorii (strain ATCC VR-613 / Malish 7).